A 66-amino-acid polypeptide reads, in one-letter code: uncharacterized protein (66 aa).

This is an uncharacterized protein from Enterobacteria phage T4 (Bacteriophage T4).